The following is a 294-amino-acid chain: Protoheme IX farnesyltransferase (294 aa).

9 helical membrane-spanning segments follow: residues 24–44, 48–68, 96–116, 118–138, 146–166, 172–192, 224–244, 245–265, and 268–288; these read VVLL…PGWV, LIAF…AINH, ALWF…LFVN, LTAL…TGYL, IVIG…AVTG, ALLL…ALAI, VLLL…WIYL, LGAL…YFTD, and VVAM…FVFL.

The protein belongs to the UbiA prenyltransferase family. Protoheme IX farnesyltransferase subfamily.

The protein localises to the cell inner membrane. It catalyses the reaction heme b + (2E,6E)-farnesyl diphosphate + H2O = Fe(II)-heme o + diphosphate. The protein operates within porphyrin-containing compound metabolism; heme O biosynthesis; heme O from protoheme: step 1/1. Converts heme B (protoheme IX) to heme O by substitution of the vinyl group on carbon 2 of heme B porphyrin ring with a hydroxyethyl farnesyl side group. The polypeptide is Protoheme IX farnesyltransferase (Legionella pneumophila (strain Paris)).